We begin with the raw amino-acid sequence, 513 residues long: MQLNSTEIAELIKKRIAQFNVVTEARNEGTIVSVSDGIIRIHGLADVMQGEMIELPGNSYGLALNLERDSVGAIVMGPYTDLAEGQKVTGTGRILEVPVGRGLLGRVVNTLGQPIDGKGPIENDGFAPVEVIAPGVIERQSVSQPVQTGYKAVDAMIPIGRGQRELIIGDRQTGKTALAIDAIINQKDSGIKCVYVAIGQKASTIANVVRKLEEHGALANTIVVVASASESASLQYLAPYSGCTMGEYFRDRGEDALIIYDDLSKHAVAYRQISLLLRRPPGREAYPGDVFYLHSRLLERASRVNTDYVEAFTKGAVKGQTGSLTALPIIETQAGDVSAFVPTNVISITDGQIFLTTQLFNAGIRPAVDPGISVSRVGGAAQTKIIKKLSGGIRTALAQYRELAAFAQFSSDLDDATRKQLNHGQKVTELMKQKQYAPMSVAQQALVLFAAERGYLEDVELNKIGDFEAALLSYANNEHADLMAEINAKADYNDDIVARLSALIDSFKATHTW.

ATP is bound at residue 169 to 176 (GDRQTGKT).

This sequence belongs to the ATPase alpha/beta chains family. As to quaternary structure, F-type ATPases have 2 components, CF(1) - the catalytic core - and CF(0) - the membrane proton channel. CF(1) has five subunits: alpha(3), beta(3), gamma(1), delta(1), epsilon(1). CF(0) has three main subunits: a(1), b(2) and c(9-12). The alpha and beta chains form an alternating ring which encloses part of the gamma chain. CF(1) is attached to CF(0) by a central stalk formed by the gamma and epsilon chains, while a peripheral stalk is formed by the delta and b chains.

The protein localises to the cell inner membrane. The enzyme catalyses ATP + H2O + 4 H(+)(in) = ADP + phosphate + 5 H(+)(out). In terms of biological role, produces ATP from ADP in the presence of a proton gradient across the membrane. The alpha chain is a regulatory subunit. The protein is ATP synthase subunit alpha of Tolumonas auensis (strain DSM 9187 / NBRC 110442 / TA 4).